An 80-amino-acid chain; its full sequence is Cytochrome c oxidase subunit 7A1, mitochondrial (80 aa).

The N-terminal 21 residues, 1–21 (MRALRVSQALVRSFSSTARNR), are a transit peptide targeting the mitochondrion. Residues 22–46 (LENRVAEKQKIFQADNDLPVHLKGG) are Mitochondrial matrix-facing. A helical transmembrane segment spans residues 47-75 (ATDNILYRVTMTLCLGGTVYSLYCLGWAS). The Mitochondrial intermembrane segment spans residues 76 to 80 (FPHKK).

Belongs to the cytochrome c oxidase VIIa family. In terms of assembly, component of the complex IV (CIV, cytochrome c oxidase), a multisubunit enzyme composed of 14 subunits. The complex is composed of a catalytic core of 3 subunits MT-CO1, MT-CO2 and MT-CO3, encoded in the mitochondrial DNA, and 11 supernumerary subunits COX4I1 (or COX4I2), COX5A, COX5B, COX6A2 (or COX6A1), COX6B1 (or COX6B2), COX6C, COX7A1 (or COX7A2), COX7B, COX7C, COX8B and NDUFA4, which are encoded in the nuclear genome. The complex exists as a monomer or a dimer and forms supercomplexes (SCs) in the inner mitochondrial membrane with NADH-ubiquinone oxidoreductase (complex I, CI) and ubiquinol-cytochrome c oxidoreductase (cytochrome b-c1 complex, complex III, CIII), resulting in different assemblies (supercomplex SCI(1)III(2)IV(1) and megacomplex MCI(2)III(2)IV(2)).

It localises to the mitochondrion inner membrane. The protein operates within energy metabolism; oxidative phosphorylation. Functionally, component of the mitochondrial respiratory complex IV (CIV, also named cytochrome c oxidase complex), the last enzyme in the mitochondrial electron transport chain which drives oxidative phosphorylation. The CIV complex is the component of the respiratory chain that catalyzes the reduction of oxygen to water. Acts as an assembly factor that specifically drives the homodimerization of CIV complexes, mediating the formation of mitochondrial respiratory supercomplexes (respirasomes) containing two CIV: supercomplxes with two molecules of CIV show improved activity. Despite being highly expressed in brown adipose tissue, not required for thermogenesis. The protein is Cytochrome c oxidase subunit 7A1, mitochondrial (COX7A1) of Sus scrofa (Pig).